Here is a 522-residue protein sequence, read N- to C-terminus: Probable protein kinase UbiB (522 aa).

Residues 119–496 (SFDADPVASA…QRRTNRLLLT (378 aa)) enclose the Protein kinase domain. ATP is bound by residues 125–133 (VASASIAQV) and K147. D282 functions as the Proton acceptor in the catalytic mechanism. A helical membrane pass occupies residues 494–514 (LLTVFYLIGGFVAGGLFAHWI).

The protein belongs to the ABC1 family. UbiB subfamily.

The protein resides in the cell inner membrane. Its pathway is cofactor biosynthesis; ubiquinone biosynthesis [regulation]. Is probably a protein kinase regulator of UbiI activity which is involved in aerobic coenzyme Q (ubiquinone) biosynthesis. The sequence is that of Probable protein kinase UbiB from Leptothrix cholodnii (strain ATCC 51168 / LMG 8142 / SP-6) (Leptothrix discophora (strain SP-6)).